A 28-amino-acid polypeptide reads, in one-letter code: Ranatuerin-2LT (28 aa).

C23 and C28 are joined by a disulfide.

Expressed by the skin glands.

The protein localises to the secreted. Functionally, has antibacterial activity. This is Ranatuerin-2LT from Rana latastei (Italian agile frog).